A 656-amino-acid polypeptide reads, in one-letter code: Acetyl-coenzyme A synthetase (656 aa).

CoA contacts are provided by residues 198–201 (RGGR) and Thr-316. Residues 392–394 (GEP), 416–421 (DTFWQT), Asp-507, and Arg-522 contribute to the ATP site. Ser-530 is a CoA binding site. Residue Arg-533 participates in ATP binding. Mg(2+) is bound by residues Val-544, His-546, and Val-549. Arg-591 serves as a coordination point for CoA. Lys-616 carries the N6-acetyllysine modification.

Belongs to the ATP-dependent AMP-binding enzyme family. It depends on Mg(2+) as a cofactor. Post-translationally, acetylated. Deacetylation by the SIR2-homolog deacetylase activates the enzyme.

The enzyme catalyses acetate + ATP + CoA = acetyl-CoA + AMP + diphosphate. Catalyzes the conversion of acetate into acetyl-CoA (AcCoA), an essential intermediate at the junction of anabolic and catabolic pathways. AcsA undergoes a two-step reaction. In the first half reaction, AcsA combines acetate with ATP to form acetyl-adenylate (AcAMP) intermediate. In the second half reaction, it can then transfer the acetyl group from AcAMP to the sulfhydryl group of CoA, forming the product AcCoA. This chain is Acetyl-coenzyme A synthetase, found in Rhodobacter capsulatus (strain ATCC BAA-309 / NBRC 16581 / SB1003).